We begin with the raw amino-acid sequence, 291 residues long: Beta-lactamase CTX-M-14 (291 aa).

A signal peptide spans methionine 1–alanine 28. Serine 73 (nucleophile; acyl-ester intermediate) is an active-site residue. 4 residues coordinate a beta-lactam: lysine 76, serine 133, glutamate 169, and serine 240.

This sequence belongs to the class-A beta-lactamase family. Monomer.

It is found in the secreted. It carries out the reaction a beta-lactam + H2O = a substituted beta-amino acid. Its activity is regulated as follows. Inhibited by the beta-lactamase-blocking agents clavulanic acid, tazobactam and sulbactam. Its function is as follows. Extended-spectrum beta-lactamase (ESBL) which confers resistance to penicillins, as well as first, second, and third-generation cephalosporins. Has cefotaxime-hydrolyzing activity. The polypeptide is Beta-lactamase CTX-M-14 (Escherichia coli).